A 273-amino-acid polypeptide reads, in one-letter code: Light-independent protochlorophyllide reductase iron-sulfur ATP-binding protein (273 aa).

ATP is bound by residues 12 to 17 and Lys41; that span reads GIGKST. Ser16 is a binding site for Mg(2+). [4Fe-4S] cluster is bound by residues Cys97 and Cys131. An ATP-binding site is contributed by 182-183; it reads NR.

The protein belongs to the NifH/BchL/ChlL family. In terms of assembly, homodimer. Protochlorophyllide reductase is composed of three subunits; BchL, BchN and BchB. [4Fe-4S] cluster is required as a cofactor.

It carries out the reaction chlorophyllide a + oxidized 2[4Fe-4S]-[ferredoxin] + 2 ADP + 2 phosphate = protochlorophyllide a + reduced 2[4Fe-4S]-[ferredoxin] + 2 ATP + 2 H2O. It functions in the pathway porphyrin-containing compound metabolism; bacteriochlorophyll biosynthesis (light-independent). Functionally, component of the dark-operative protochlorophyllide reductase (DPOR) that uses Mg-ATP and reduced ferredoxin to reduce ring D of protochlorophyllide (Pchlide) to form chlorophyllide a (Chlide). This reaction is light-independent. The L component serves as a unique electron donor to the NB-component of the complex, and binds Mg-ATP. The chain is Light-independent protochlorophyllide reductase iron-sulfur ATP-binding protein from Chloroflexus aggregans (strain MD-66 / DSM 9485).